A 339-amino-acid chain; its full sequence is MRVYYDRDADLNLIKAKKVAVIGYGSQGRAHALNLKDSGAQNVVIALKAGSPTVKKAEADGFKVMTVAEAAAWADLMMMATPDELQADIYKADIAGNIRDGAAIAFAHGLNVHFGLIEPKASVDVVMIAPKGPGHTVRGEYQKGGGVPCLVAVHQNASGNALELALSYACGVGGGRSGIIETNFREECETDLFGEQVVLCGGLVELIRAGFETLTEAGYAPEMAYFECLHEVKLIVDLIYEGGIANMNYSISNTAEWGEYVSGPRIITAETKAEMKRVLKDIQTGKFTSDWMQEYRAGGSRFKGIRRLNDSHPIEEVGAKLRGMMPWIGKNKLVDKSVN.

One can recognise a KARI N-terminal Rossmann domain in the interval 1 to 182; sequence MRVYYDRDAD…GGGRSGIIET (182 aa). Residues 24 to 27, K48, S51, T53, and 83 to 86 contribute to the NADP(+) site; these read YGSQ and DELQ. H108 is an active-site residue. Residue G134 coordinates NADP(+). A KARI C-terminal knotted domain is found at 183–328; it reads NFREECETDL…AKLRGMMPWI (146 aa). 4 residues coordinate Mg(2+): D191, E195, E227, and E231. Residue S252 participates in substrate binding.

It belongs to the ketol-acid reductoisomerase family. The cofactor is Mg(2+).

It catalyses the reaction (2R)-2,3-dihydroxy-3-methylbutanoate + NADP(+) = (2S)-2-acetolactate + NADPH + H(+). The catalysed reaction is (2R,3R)-2,3-dihydroxy-3-methylpentanoate + NADP(+) = (S)-2-ethyl-2-hydroxy-3-oxobutanoate + NADPH + H(+). It functions in the pathway amino-acid biosynthesis; L-isoleucine biosynthesis; L-isoleucine from 2-oxobutanoate: step 2/4. Its pathway is amino-acid biosynthesis; L-valine biosynthesis; L-valine from pyruvate: step 2/4. Functionally, involved in the biosynthesis of branched-chain amino acids (BCAA). Catalyzes an alkyl-migration followed by a ketol-acid reduction of (S)-2-acetolactate (S2AL) to yield (R)-2,3-dihydroxy-isovalerate. In the isomerase reaction, S2AL is rearranged via a Mg-dependent methyl migration to produce 3-hydroxy-3-methyl-2-ketobutyrate (HMKB). In the reductase reaction, this 2-ketoacid undergoes a metal-dependent reduction by NADPH to yield (R)-2,3-dihydroxy-isovalerate. This Rhizobium johnstonii (strain DSM 114642 / LMG 32736 / 3841) (Rhizobium leguminosarum bv. viciae) protein is Ketol-acid reductoisomerase (NADP(+)).